The following is a 203-amino-acid chain: ATP-dependent Clp protease proteolytic subunit 2 (203 aa).

The active-site Nucleophile is serine 98. The active site involves histidine 123.

It belongs to the peptidase S14 family. In terms of assembly, fourteen ClpP subunits assemble into 2 heptameric rings which stack back to back to give a disk-like structure with a central cavity, resembling the structure of eukaryotic proteasomes.

Its subcellular location is the cytoplasm. The catalysed reaction is Hydrolysis of proteins to small peptides in the presence of ATP and magnesium. alpha-casein is the usual test substrate. In the absence of ATP, only oligopeptides shorter than five residues are hydrolyzed (such as succinyl-Leu-Tyr-|-NHMec, and Leu-Tyr-Leu-|-Tyr-Trp, in which cleavage of the -Tyr-|-Leu- and -Tyr-|-Trp bonds also occurs).. In terms of biological role, cleaves peptides in various proteins in a process that requires ATP hydrolysis. Has a chymotrypsin-like activity. Plays a major role in the degradation of misfolded proteins. The polypeptide is ATP-dependent Clp protease proteolytic subunit 2 (Chlamydia muridarum (strain MoPn / Nigg)).